The following is an 876-amino-acid chain: Serrate RNA effector molecule homolog (876 aa).

The tract at residues 1 to 90 (MGDSDDEYDR…RRDWDEHSSD (90 aa)) is disordered. N-acetylglycine is present on Gly2. Ser4 is modified (phosphoserine). A Phosphotyrosine modification is found at Tyr8. A compositionally biased stretch (basic and acidic residues) spans 8-73 (YDRRRRDKFR…ERFSPPRHEL (66 aa)). Phosphoserine is present on residues Ser67, Ser74, and Ser136. Lys150 is covalently cross-linked (Glycyl lysine isopeptide (Lys-Gly) (interchain with G-Cter in SUMO2)). The segment at 272 to 413 (EEEEQAGKPG…PKDAPGLECK (142 aa)) is disordered. Over residues 297-347 (DGERKANEKDDKKEDGKQAENESSSDDKIKKSEGDGDKEEKKEDSEKEAKK) the composition is skewed to basic and acidic residues. A compositionally biased stretch (acidic residues) spans 370–387 (SESESESGQAEEEKEEAD). Over residues 388 to 413 (ETLKEKEKPKEEEREKPKDAPGLECK) the composition is skewed to basic and acidic residues. Residue Ser493 is modified to Phosphoserine. Thr544 carries the phosphothreonine modification. Ser570 is modified (phosphoserine). The disordered stretch occupies residues 575-597 (ELLGSSGGAPPEEPPKEGNPAEI). Phosphothreonine is present on Thr671. Phosphoserine is present on Ser679. Omega-N-methylarginine is present on residues Arg833, Arg840, and Arg850. The interval 835-854 (NYDAFRGQGGYPGKPRNRMV) is disordered.

It belongs to the ARS2 family. Interacts with CASP8AP2, ERBB4, NCBP1/CBP80 and DROSHA. Interacts with LUZP4. Interacts with NCBP2/CBP20 and NCBP3. Interacts with MTREX.

The protein localises to the nucleus. It localises to the nucleoplasm. It is found in the cytoplasm. Functionally, acts as a mediator between the cap-binding complex (CBC) and the primary microRNAs (miRNAs) processing machinery during cell proliferation. Contributes to the stability and delivery of capped primary miRNA transcripts to the primary miRNA processing complex containing DGCR8 and DROSHA, thereby playing a role in RNA-mediated gene silencing (RNAi) by miRNAs. Binds capped RNAs (m7GpppG-capped RNA); however interaction is probably mediated via its interaction with NCBP1/CBP80 component of the CBC complex. Involved in cell cycle progression at S phase. Does not directly confer arsenite resistance but rather modulates arsenic sensitivity. Independently of its activity on miRNAs, necessary and sufficient to promote neural stem cell self-renewal. Does so by directly binding SOX2 promoter and positively regulating its transcription. This is Serrate RNA effector molecule homolog (SRRT) from Bos taurus (Bovine).